We begin with the raw amino-acid sequence, 60 residues long: Short neurotoxin 1 (60 aa).

4 cysteine pairs are disulfide-bonded: Cys-3–Cys-22, Cys-17–Cys-39, Cys-41–Cys-52, and Cys-53–Cys-58.

The protein belongs to the three-finger toxin family. Short-chain subfamily. Type I alpha-neurotoxin sub-subfamily. Expressed by the venom gland.

Its subcellular location is the secreted. Its function is as follows. Binds to muscle nicotinic acetylcholine receptor (nAChR) and inhibit acetylcholine from binding to the receptor, thereby impairing neuromuscular transmission. In Dendroaspis jamesoni kaimosae (Eastern Jameson's mamba), this protein is Short neurotoxin 1.